Here is a 229-residue protein sequence, read N- to C-terminus: 2-C-methyl-D-erythritol 4-phosphate cytidylyltransferase (229 aa).

It belongs to the IspD/TarI cytidylyltransferase family. IspD subfamily.

It carries out the reaction 2-C-methyl-D-erythritol 4-phosphate + CTP + H(+) = 4-CDP-2-C-methyl-D-erythritol + diphosphate. It functions in the pathway isoprenoid biosynthesis; isopentenyl diphosphate biosynthesis via DXP pathway; isopentenyl diphosphate from 1-deoxy-D-xylulose 5-phosphate: step 2/6. Its function is as follows. Catalyzes the formation of 4-diphosphocytidyl-2-C-methyl-D-erythritol from CTP and 2-C-methyl-D-erythritol 4-phosphate (MEP). This Clostridium botulinum (strain Okra / Type B1) protein is 2-C-methyl-D-erythritol 4-phosphate cytidylyltransferase.